A 336-amino-acid polypeptide reads, in one-letter code: Mediator of RNA polymerase II transcription subunit 4 (336 aa).

2 disordered regions span residues 1 to 45 (MNST…SNVV) and 59 to 85 (NVEE…QDEA). The stretch at 154-192 (QQAAQTIAALERVSEGLDDKIRDMIRKLAECRRELRNYQ) forms a coiled coil. The segment at 281-336 (PVANGVAQNHNNGYAMERRLSTGYGSDNDGDTNMNGRSGLAGLDIFDDDDDDDDDD) is disordered. The span at 325–336 (IFDDDDDDDDDD) shows a compositional bias: acidic residues.

Belongs to the Mediator complex subunit 4 family. In terms of assembly, component of the Mediator complex.

Its subcellular location is the nucleus. Its function is as follows. Component of the Mediator complex, a coactivator involved in the regulated transcription of nearly all RNA polymerase II-dependent genes. Mediator functions as a bridge to convey information from gene-specific regulatory proteins to the basal RNA polymerase II transcription machinery. Mediator is recruited to promoters by direct interactions with regulatory proteins and serves as a scaffold for the assembly of a functional preinitiation complex with RNA polymerase II and the general transcription factors. This chain is Mediator of RNA polymerase II transcription subunit 4 (MED4), found in Yarrowia lipolytica (strain CLIB 122 / E 150) (Yeast).